The chain runs to 355 residues: MGGKTFMLMAGGTGGHIFPALAVADSLRARGHHVIWLGSKDSMEERIVPQYGIRLETLAIKGVRGNGIKRKLMLPFTLYQTVREAQRIIRKHRVECVIGFGGFVTFPGGLAAKLLGVPIVIHEQNAVAGLSNRHLSRWAKRVLYAFPKAFSHEGGLVGNPVRADISNLPVPAERFQGREGRLKILVVGGSLGADVLNKTVPQALALLPDNARPQMYHQSGRGKLGSLQADYDALGVQAECVEFITDMVSAYRDADLVICRAGALTIAELTAAGLGALLVPYPHAVDDHQTANARFMVQAEAGLLLPQTQLTAEKLAEILGSLNREKCLKWAENARTLALPHSADDVAEAAIACAA.

Residues 13–15, asparagine 125, arginine 162, serine 190, isoleucine 244, and glutamine 289 each bind UDP-N-acetyl-alpha-D-glucosamine; that span reads TGG.

Belongs to the glycosyltransferase 28 family. MurG subfamily.

The protein resides in the cell inner membrane. The catalysed reaction is di-trans,octa-cis-undecaprenyl diphospho-N-acetyl-alpha-D-muramoyl-L-alanyl-D-glutamyl-meso-2,6-diaminopimeloyl-D-alanyl-D-alanine + UDP-N-acetyl-alpha-D-glucosamine = di-trans,octa-cis-undecaprenyl diphospho-[N-acetyl-alpha-D-glucosaminyl-(1-&gt;4)]-N-acetyl-alpha-D-muramoyl-L-alanyl-D-glutamyl-meso-2,6-diaminopimeloyl-D-alanyl-D-alanine + UDP + H(+). It functions in the pathway cell wall biogenesis; peptidoglycan biosynthesis. Functionally, cell wall formation. Catalyzes the transfer of a GlcNAc subunit on undecaprenyl-pyrophosphoryl-MurNAc-pentapeptide (lipid intermediate I) to form undecaprenyl-pyrophosphoryl-MurNAc-(pentapeptide)GlcNAc (lipid intermediate II). The protein is UDP-N-acetylglucosamine--N-acetylmuramyl-(pentapeptide) pyrophosphoryl-undecaprenol N-acetylglucosamine transferase of Neisseria meningitidis serogroup C (strain 053442).